Consider the following 194-residue polypeptide: Holliday junction branch migration complex subunit RuvA (194 aa).

Positions Met-1–Ala-64 are domain I. The interval Thr-65–Ala-143 is domain II. The interval Ala-144 to Ala-147 is flexible linker. A domain III region spans residues Ala-147 to Lys-194.

This sequence belongs to the RuvA family. Homotetramer. Forms an RuvA(8)-RuvB(12)-Holliday junction (HJ) complex. HJ DNA is sandwiched between 2 RuvA tetramers; dsDNA enters through RuvA and exits via RuvB. An RuvB hexamer assembles on each DNA strand where it exits the tetramer. Each RuvB hexamer is contacted by two RuvA subunits (via domain III) on 2 adjacent RuvB subunits; this complex drives branch migration. In the full resolvosome a probable DNA-RuvA(4)-RuvB(12)-RuvC(2) complex forms which resolves the HJ.

It is found in the cytoplasm. Its function is as follows. The RuvA-RuvB-RuvC complex processes Holliday junction (HJ) DNA during genetic recombination and DNA repair, while the RuvA-RuvB complex plays an important role in the rescue of blocked DNA replication forks via replication fork reversal (RFR). RuvA specifically binds to HJ cruciform DNA, conferring on it an open structure. The RuvB hexamer acts as an ATP-dependent pump, pulling dsDNA into and through the RuvAB complex. HJ branch migration allows RuvC to scan DNA until it finds its consensus sequence, where it cleaves and resolves the cruciform DNA. This Neisseria meningitidis serogroup B (strain ATCC BAA-335 / MC58) protein is Holliday junction branch migration complex subunit RuvA.